The following is a 266-amino-acid chain: Glucosamine-6-phosphate deaminase (266 aa).

Asp-72 serves as the catalytic Proton acceptor; for enolization step. Residue Asp-141 is the For ring-opening step of the active site. Residue His-143 is the Proton acceptor; for ring-opening step of the active site. The active-site For ring-opening step is the Glu-148.

The protein belongs to the glucosamine/galactosamine-6-phosphate isomerase family. NagB subfamily. Homohexamer.

It carries out the reaction alpha-D-glucosamine 6-phosphate + H2O = beta-D-fructose 6-phosphate + NH4(+). It functions in the pathway amino-sugar metabolism; N-acetylneuraminate degradation; D-fructose 6-phosphate from N-acetylneuraminate: step 5/5. Allosterically activated by N-acetylglucosamine 6-phosphate (GlcNAc6P). Its function is as follows. Catalyzes the reversible isomerization-deamination of glucosamine 6-phosphate (GlcN6P) to form fructose 6-phosphate (Fru6P) and ammonium ion. The chain is Glucosamine-6-phosphate deaminase from Tolumonas auensis (strain DSM 9187 / NBRC 110442 / TA 4).